Reading from the N-terminus, the 368-residue chain is MAKRDYYEVLGVSKTASDDEIKKAYRKLAMKYHPDRNPDNAEAEDKFKEASEAYEVLSDSEKRSMYDRMGHNAFEGGGGGGFGGFSAEDIFSQFGDIFGGAFGGGGRQQQRQRRGSDLRYVMELSLEEAVRGVKKTITFTAPAPCEVCDGKGSKNPNDVETCRTCHGTGQVRMQQGFFSVQQTCGTCRGQGKIIKNPCQSCHGSGVADRQQTLEVTIPAGVDNGDRVRLSGKGEAVRDGQAGDLYVEVVVREHEIFQRDGADLYMDVPVSIADAALGKEIEIPTLEGRVSLKIPEGTQTGKLFRLRGKGVRPVRSSMVGDLLCRVVVETPVNLTSRQRELFKELQATLDGDEHSSSPKKKSFFDRLFD.

Positions 5 to 70 constitute a J domain; sequence DYYEVLGVSK…EKRSMYDRMG (66 aa). A CR-type zinc finger spans residues 132 to 210; sequence GVKKTITFTA…CHGSGVADRQ (79 aa). Residues C145, C148, C162, C165, C184, C187, C198, and C201 each coordinate Zn(2+). CXXCXGXG motif repeat units lie at residues 145–152, 162–169, 184–191, and 198–205; these read CEVCDGKG, CRTCHGTG, CGTCRGQG, and CQSCHGSG. The disordered stretch occupies residues 349–368; the sequence is DGDEHSSSPKKKSFFDRLFD. Residues 350–368 show a composition bias toward basic and acidic residues; the sequence is GDEHSSSPKKKSFFDRLFD.

This sequence belongs to the DnaJ family. Homodimer. Requires Zn(2+) as cofactor.

Its subcellular location is the cytoplasm. Participates actively in the response to hyperosmotic and heat shock by preventing the aggregation of stress-denatured proteins and by disaggregating proteins, also in an autonomous, DnaK-independent fashion. Unfolded proteins bind initially to DnaJ; upon interaction with the DnaJ-bound protein, DnaK hydrolyzes its bound ATP, resulting in the formation of a stable complex. GrpE releases ADP from DnaK; ATP binding to DnaK triggers the release of the substrate protein, thus completing the reaction cycle. Several rounds of ATP-dependent interactions between DnaJ, DnaK and GrpE are required for fully efficient folding. Also involved, together with DnaK and GrpE, in the DNA replication of plasmids through activation of initiation proteins. The chain is Chaperone protein DnaJ from Acinetobacter baylyi (strain ATCC 33305 / BD413 / ADP1).